The chain runs to 312 residues: uncharacterized protein (312 aa).

112–118 (LIGLPMV) provides a ligand contact to ATP.

The protein belongs to the MurCDEF family.

This is an uncharacterized protein from Methanothermobacter thermautotrophicus (strain ATCC 29096 / DSM 1053 / JCM 10044 / NBRC 100330 / Delta H) (Methanobacterium thermoautotrophicum).